The chain runs to 265 residues: Hydroxyethylthiazole kinase (265 aa).

Position 43 (Met-43) interacts with substrate. Residues Arg-119 and Ser-165 each contribute to the ATP site. Ala-192 is a substrate binding site.

This sequence belongs to the Thz kinase family. Mg(2+) is required as a cofactor.

The enzyme catalyses 5-(2-hydroxyethyl)-4-methylthiazole + ATP = 4-methyl-5-(2-phosphooxyethyl)-thiazole + ADP + H(+). It functions in the pathway cofactor biosynthesis; thiamine diphosphate biosynthesis; 4-methyl-5-(2-phosphoethyl)-thiazole from 5-(2-hydroxyethyl)-4-methylthiazole: step 1/1. Catalyzes the phosphorylation of the hydroxyl group of 4-methyl-5-beta-hydroxyethylthiazole (THZ). The protein is Hydroxyethylthiazole kinase of Haemophilus influenzae (strain ATCC 51907 / DSM 11121 / KW20 / Rd).